The sequence spans 294 residues: GDP-6-deoxy-D-talose 4-dehydrogenase (294 aa).

NAD(+) contacts are provided by residues 11–12 (FI), 38–39 (DL), 60–64 (LAALT), Thr104, Tyr128, Lys132, and Phe154. Positions 104 and 128 each coordinate substrate. Tyr128 (proton acceptor) is an active-site residue. Substrate-binding residues include Asn155 and Arg190.

This sequence belongs to the NAD(P)-dependent epimerase/dehydratase family.

The enzyme catalyses GDP-6-deoxy-alpha-D-talose + NAD(+) = GDP-4-dehydro-alpha-D-rhamnose + NADH + H(+). It carries out the reaction GDP-6-deoxy-alpha-D-talose + NADP(+) = GDP-4-dehydro-alpha-D-rhamnose + NADPH + H(+). It functions in the pathway bacterial outer membrane biogenesis; LPS O-antigen biosynthesis. In terms of biological role, catalyzes the conversion of GDP-4-dehydro-6-deoxy-D-mannose to GDP-6-deoxy-D-talose. The chain is GDP-6-deoxy-D-talose 4-dehydrogenase (tld) from Aggregatibacter actinomycetemcomitans (Actinobacillus actinomycetemcomitans).